A 596-amino-acid chain; its full sequence is Fructan 1-exohydrolase (596 aa).

The first 20 residues, 1–20 (MAQAWAFLLPVLVLGSYVTS), serve as a signal peptide directing secretion. Residue aspartate 75 is part of the active site. N-linked (GlcNAc...) asparagine glycosylation is found at asparagine 168, asparagine 236, and asparagine 248. Cysteine 446 and cysteine 492 form a disulfide bridge. N-linked (GlcNAc...) asparagine glycosylation occurs at asparagine 567.

It belongs to the glycosyl hydrolase 32 family.

The catalysed reaction is Hydrolysis of terminal, non-reducing (2-&gt;1)-linked beta-D-fructofuranose residues in fructans.. With respect to regulation, inhibited by sucrose. In terms of biological role, hydrolyzes inulin-type beta-(2,1)-fructans. May play a role as a beta-(2,1)-trimmer during graminan biosynthesis. The chain is Fructan 1-exohydrolase from Aegilops tauschii (Tausch's goatgrass).